The chain runs to 439 residues: MSKLYLMSLGCNKNLVDSEIMLGRLSAYELCDEPSKADVIIVNTCGFIDSAKKESINAILDLHEQRKKDSLLVVTGCLMQRYREELMKELPEVDLFTGVGDYERIDEMILKKTNLFSNSTYLQSENSKRIITGSNSHAFIKIAEGCNQKCSFCAIPSFKGKLKSREISSIIAELKDLVARGYKDFSFIAQDTSSYLFDKGEKDGLIRLIDEVEKIKGIRAARILYLYPTSASEALIKRIIASEIFVNYFDMPLQHISDNMLKIMKRGANSTRLKEMLNLMKSAPNSFLRTGFIVGHPGESEADFEELCEFVKDFGFDRVSVFAYSKEEDTTAFDMEQVPFKVINKRLKIIEKIVDEVIEKSFEKEVGQKRLVVCTGESSEGEFFIAAKDLRWDREIDGEILINESECGNLEMGQIYECEILQNLDKKLLAKALRKVDAN.

In terms of domain architecture, MTTase N-terminal spans 2–114 (SKLYLMSLGC…IDEMILKKTN (113 aa)). Positions 11, 45, 77, 146, 150, and 153 each coordinate [4Fe-4S] cluster. One can recognise a Radical SAM core domain in the interval 132–363 (TGSNSHAFIK…VDEVIEKSFE (232 aa)).

It belongs to the methylthiotransferase family. RimO subfamily. The cofactor is [4Fe-4S] cluster.

It localises to the cytoplasm. It carries out the reaction L-aspartate(89)-[ribosomal protein uS12]-hydrogen + (sulfur carrier)-SH + AH2 + 2 S-adenosyl-L-methionine = 3-methylsulfanyl-L-aspartate(89)-[ribosomal protein uS12]-hydrogen + (sulfur carrier)-H + 5'-deoxyadenosine + L-methionine + A + S-adenosyl-L-homocysteine + 2 H(+). Its function is as follows. Catalyzes the methylthiolation of an aspartic acid residue of ribosomal protein uS12. The protein is Ribosomal protein uS12 methylthiotransferase RimO of Campylobacter jejuni subsp. jejuni serotype O:23/36 (strain 81-176).